We begin with the raw amino-acid sequence, 363 residues long: Glutamate 5-kinase (363 aa).

Lysine 3 is a binding site for ATP. Substrate is bound by residues serine 43, aspartate 128, and asparagine 140. Residues 160–161 (TD) and 202–208 (TGGMRTK) contribute to the ATP site. One can recognise a PUA domain in the interval 267 to 349 (AGAILIDDGA…REIENVLGYS (83 aa)).

It belongs to the glutamate 5-kinase family.

Its subcellular location is the cytoplasm. It catalyses the reaction L-glutamate + ATP = L-glutamyl 5-phosphate + ADP. Its pathway is amino-acid biosynthesis; L-proline biosynthesis; L-glutamate 5-semialdehyde from L-glutamate: step 1/2. In terms of biological role, catalyzes the transfer of a phosphate group to glutamate to form L-glutamate 5-phosphate. In Xanthomonas axonopodis pv. citri (strain 306), this protein is Glutamate 5-kinase.